A 347-amino-acid polypeptide reads, in one-letter code: Haptoglobin (347 aa).

An N-terminal signal peptide occupies residues Met1 to Ala18. The Sushi domain maps to Asp31–Ala88. Cystine bridges form between Cys52/Cys86, Cys90/Cys207, Cys250/Cys281, and Cys292/Cys322. Residues Ile103–Ala345 enclose the Peptidase S1 domain. Asn148, Asn182, and Asn264 each carry an N-linked (GlcNAc...) asparagine glycan. The segment at Val259–Asn264 is interaction with CD163.

Belongs to the peptidase S1 family. In terms of assembly, tetramer of two alpha and two beta chains; disulfide-linked. The hemoglobin/haptoglobin complex is composed of a haptoglobin dimer bound to two hemoglobin alpha-beta dimers. Interacts with CD163. Interacts with ERGIC3. Expressed by the liver and secreted in plasma.

It is found in the secreted. In terms of biological role, as a result of hemolysis, hemoglobin is found to accumulate in the kidney and is secreted in the urine. Haptoglobin captures, and combines with free plasma hemoglobin to allow hepatic recycling of heme iron and to prevent kidney damage. Haptoglobin also acts as an antioxidant, has antibacterial activity and plays a role in modulating many aspects of the acute phase response. Hemoglobin/haptoglobin complexes are rapidly cleared by the macrophage CD163 scavenger receptor expressed on the surface of liver Kupfer cells through an endocytic lysosomal degradation pathway. This chain is Haptoglobin (Hp), found in Mus caroli (Ryukyu mouse).